The chain runs to 588 residues: Probable G-protein coupled receptor 162 (588 aa).

Over 1–17 (MARGGLGAEEASLRSNA) the chain is Extracellular. Residues 18–38 (LSWLACGLLALLANAWIILSI) traverse the membrane as a helical segment. Residues 39–49 (SAKQQKHKPLE) lie on the Cytoplasmic side of the membrane. The chain crosses the membrane as a helical span at residues 50–70 (LLLCFLAGTHILMAAVPLTTF). The Extracellular segment spans residues 71-91 (AVVQLRRQASSDYDWNESICK). Asn86 carries an N-linked (GlcNAc...) asparagine glycan. Residues 92-112 (VFVSTYYTLALATCFTVASLS) traverse the membrane as a helical segment. The Cytoplasmic segment spans residues 113 to 133 (YHRMWMVRWPVNYRLSNAKKQ). A helical membrane pass occupies residues 134 to 154 (ALHAVMGIWMVSFILSTLPSI). The Extracellular segment spans residues 155-174 (GWHNNGERYYARGCQFIVSK). A helical membrane pass occupies residues 175–195 (IGLGFGVCFSLLLLGGIVMGL). The Cytoplasmic portion of the chain corresponds to 196-275 (VCVAITFYQT…SLQVTNLVSA (80 aa)). The helical transmembrane segment at 276-296 (IVFLYDSLTGVPILVVSFFSL) threads the bilayer. At 297 to 303 (KSDSAPP) the chain is on the extracellular side. Residues 304 to 324 (WMVLAVLWCSMAQTLLLPSFI) traverse the membrane as a helical segment. At 325 to 588 (WSCERYRADV…GNPIFPQLTL (264 aa)) the chain is on the cytoplasmic side. A phosphoserine mark is found at Ser413 and Ser435. Disordered regions lie at residues 511 to 545 (ETPL…SPDS) and 561 to 588 (SLTG…QLTL). The segment covering 514 to 525 (LPSPTASPGPSP) has biased composition (pro residues). Low complexity predominate over residues 530–540 (PLGFSPRRLSL).

The protein belongs to the G-protein coupled receptor 1 family.

The protein resides in the cell membrane. Orphan receptor. The polypeptide is Probable G-protein coupled receptor 162 (Gpr162) (Mus musculus (Mouse)).